A 226-amino-acid chain; its full sequence is Isoprenyl transferase (226 aa).

D12 is a catalytic residue. Mg(2+) is bound at residue D12. Substrate-binding positions include 13 to 16, W17, K25, H29, and 57 to 59; these read GNAR and SSE. The Proton acceptor role is filled by N60. Substrate is bound by residues W61, R63, R174, and 180 to 182; that span reads RIS. Mg(2+) is bound at residue E193.

The protein belongs to the UPP synthase family. Homodimer. The cofactor is Mg(2+).

Functionally, catalyzes the condensation of isopentenyl diphosphate (IPP) with allylic pyrophosphates generating different type of terpenoids. This is Isoprenyl transferase from Rickettsia bellii (strain RML369-C).